A 378-amino-acid chain; its full sequence is Ubiquitin-conjugating enzyme E2 Q2 (378 aa).

Positions 126–152 are disordered; sequence DQPLPTGQNGTTEEVTSEEEEEEEMAE. A compositionally biased stretch (acidic residues) spans 140–152; that stretch reads VTSEEEEEEEMAE. The UBC core domain occupies 207-371; sequence QASDRLMKEL…VQIHEKNGWY (165 aa). Catalysis depends on cysteine 307, which acts as the Glycyl thioester intermediate.

It belongs to the ubiquitin-conjugating enzyme family. Auto-ubiquitinated in vitro.

The protein resides in the cytoplasm. It catalyses the reaction S-ubiquitinyl-[E1 ubiquitin-activating enzyme]-L-cysteine + [E2 ubiquitin-conjugating enzyme]-L-cysteine = [E1 ubiquitin-activating enzyme]-L-cysteine + S-ubiquitinyl-[E2 ubiquitin-conjugating enzyme]-L-cysteine.. The protein operates within protein modification; protein ubiquitination. Functionally, accepts ubiquitin from the E1 complex and catalyzes its covalent attachment to other proteins. In vitro catalyzes 'Lys-48'-linked polyubiquitination. The chain is Ubiquitin-conjugating enzyme E2 Q2 (Ube2q2) from Mus musculus (Mouse).